The primary structure comprises 569 residues: TBCC domain-containing protein 1 (569 aa).

Positions 304–435 constitute a C-CAP/cofactor C-like domain; the sequence is PRSHRIVVMS…LEDHMARTGL (132 aa).

It belongs to the TBCC family.

Its subcellular location is the cytoplasm. The protein resides in the cytoskeleton. It is found in the microtubule organizing center. The protein localises to the centrosome. It localises to the spindle pole. In terms of biological role, plays a role in the regulation of centrosome and Golgi apparatus positioning, with consequences on cell shape and cell migration. In Rattus norvegicus (Rat), this protein is TBCC domain-containing protein 1 (Tbccd1).